The sequence spans 374 residues: Histidine biosynthesis bifunctional protein HisB (374 aa).

Positions 1–183 are histidinol-phosphatase; sequence MKKKVLFIDR…RVAEFLFAGE (183 aa). Asp-9 serves as the catalytic Nucleophile. The Mg(2+) site is built by Asp-9, Asp-11, and Asp-131. Asp-11 acts as the Proton donor in catalysis. An imidazoleglycerol-phosphate dehydratase region spans residues 184–374; sequence RRAEIRRTTK…FELPSSKGVL (191 aa).

The protein in the N-terminal section; belongs to the histidinol-phosphatase family. It in the C-terminal section; belongs to the imidazoleglycerol-phosphate dehydratase family. Mg(2+) is required as a cofactor.

Its subcellular location is the cytoplasm. It catalyses the reaction D-erythro-1-(imidazol-4-yl)glycerol 3-phosphate = 3-(imidazol-4-yl)-2-oxopropyl phosphate + H2O. It carries out the reaction L-histidinol phosphate + H2O = L-histidinol + phosphate. The protein operates within amino-acid biosynthesis; L-histidine biosynthesis; L-histidine from 5-phospho-alpha-D-ribose 1-diphosphate: step 6/9. It participates in amino-acid biosynthesis; L-histidine biosynthesis; L-histidine from 5-phospho-alpha-D-ribose 1-diphosphate: step 8/9. The sequence is that of Histidine biosynthesis bifunctional protein HisB from Bacteroides fragilis (strain ATCC 25285 / DSM 2151 / CCUG 4856 / JCM 11019 / LMG 10263 / NCTC 9343 / Onslow / VPI 2553 / EN-2).